A 183-amino-acid polypeptide reads, in one-letter code: Peptidyl-tRNA hydrolase (183 aa).

A tRNA-binding site is contributed by Tyr-14. The active-site Proton acceptor is the His-19. Residues Tyr-61, Asn-63, and Asn-109 each coordinate tRNA.

It belongs to the PTH family. Monomer.

It is found in the cytoplasm. It catalyses the reaction an N-acyl-L-alpha-aminoacyl-tRNA + H2O = an N-acyl-L-amino acid + a tRNA + H(+). Its function is as follows. Hydrolyzes ribosome-free peptidyl-tRNAs (with 1 or more amino acids incorporated), which drop off the ribosome during protein synthesis, or as a result of ribosome stalling. In terms of biological role, catalyzes the release of premature peptidyl moieties from peptidyl-tRNA molecules trapped in stalled 50S ribosomal subunits, and thus maintains levels of free tRNAs and 50S ribosomes. The sequence is that of Peptidyl-tRNA hydrolase from Aliarcobacter butzleri (strain RM4018) (Arcobacter butzleri).